Consider the following 149-residue polypeptide: UPF0336 protein CMM_2793 (149 aa).

A MaoC-like domain is found at 16-117; it reads APYLVGREKV…TVTKVATLGG (102 aa).

It belongs to the UPF0336 family.

This chain is UPF0336 protein CMM_2793, found in Clavibacter michiganensis subsp. michiganensis (strain NCPPB 382).